Reading from the N-terminus, the 199-residue chain is Fe/S biogenesis protein NfuA (199 aa).

[4Fe-4S] cluster is bound by residues C151 and C154.

This sequence belongs to the NfuA family. Homodimer. Requires [4Fe-4S] cluster as cofactor.

In terms of biological role, involved in iron-sulfur cluster biogenesis. Binds a 4Fe-4S cluster, can transfer this cluster to apoproteins, and thereby intervenes in the maturation of Fe/S proteins. Could also act as a scaffold/chaperone for damaged Fe/S proteins. The sequence is that of Fe/S biogenesis protein NfuA from Xanthomonas campestris pv. campestris (strain 8004).